A 236-amino-acid chain; its full sequence is Small ribosomal subunit protein uS2c (236 aa).

It belongs to the universal ribosomal protein uS2 family.

Its subcellular location is the plastid. It is found in the chloroplast. This is Small ribosomal subunit protein uS2c (rps2) from Physcomitrium patens (Spreading-leaved earth moss).